Here is a 262-residue protein sequence, read N- to C-terminus: Pimeloyl-[acyl-carrier protein] methyl ester esterase (262 aa).

The 228-residue stretch at 15–242 folds into the AB hydrolase-1 domain; sequence HLVLLHGWGL…AAHAPFISHP (228 aa). Substrate contacts are provided by residues Trp22, 82-83, and 143-147; these read SL and FLALQ. Ser82 acts as the Nucleophile in catalysis. Catalysis depends on residues Asp207 and His235. Residue His235 participates in substrate binding.

The protein belongs to the AB hydrolase superfamily. Carboxylesterase BioH family. In terms of assembly, monomer.

Its subcellular location is the cytoplasm. The catalysed reaction is 6-carboxyhexanoyl-[ACP] methyl ester + H2O = 6-carboxyhexanoyl-[ACP] + methanol + H(+). Its pathway is cofactor biosynthesis; biotin biosynthesis. In terms of biological role, the physiological role of BioH is to remove the methyl group introduced by BioC when the pimeloyl moiety is complete. It allows to synthesize pimeloyl-ACP via the fatty acid synthetic pathway through the hydrolysis of the ester bonds of pimeloyl-ACP esters. This is Pimeloyl-[acyl-carrier protein] methyl ester esterase from Shigella flexneri.